A 183-amino-acid chain; its full sequence is Caspase recruitment domain-containing protein 19 (183 aa).

Cysteine 7 and cysteine 77 are oxidised to a cystine. Residues 8 to 99 (DRLVQDTPFL…PLHSHLPSRY (92 aa)) enclose the CARD domain. Residues 122–142 (GPMSFLAGLGLAAGLALLLYC) form a helical membrane-spanning segment.

As to quaternary structure, associates with BCL10 by CARD-CARD interaction.

It localises to the endoplasmic reticulum membrane. The protein resides in the mitochondrion membrane. In terms of biological role, plays a role in inhibiting the effects of BCL10-induced activation of NF-kappa-B. This chain is Caspase recruitment domain-containing protein 19, found in Mus musculus (Mouse).